The chain runs to 192 residues: Cytidylate kinase (192 aa).

7 to 15 serves as a coordination point for ATP; the sequence is GPPGSGKST.

The protein belongs to the cytidylate kinase family. Type 2 subfamily.

It is found in the cytoplasm. It carries out the reaction CMP + ATP = CDP + ADP. It catalyses the reaction dCMP + ATP = dCDP + ADP. The sequence is that of Cytidylate kinase from Halobacterium salinarum (strain ATCC 29341 / DSM 671 / R1).